Here is a 178-residue protein sequence, read N- to C-terminus: Caveolin-1 (178 aa).

At serine 2 the chain carries N-acetylserine. Serine 2 is modified (phosphoserine). Positions 2-94 (SGGKYIDSEG…WKASFTTFTV (93 aa)) are required for homooligomerization. Residues 2–104 (SGGKYIDSEG…TKYWFYRLLS (103 aa)) are Cytoplasmic-facing. An N6-acetyllysine; alternate modification is found at lysine 5. Lysine 5 participates in a covalent cross-link: Glycyl lysine isopeptide (Lys-Gly) (interchain with G-Cter in ubiquitin); alternate. Tyrosine 6 bears the Phosphotyrosine mark. Serine 9 is modified (phosphoserine). Tyrosine 14 is subject to Phosphotyrosine; by ABL1. Tyrosine 25 is subject to Phosphotyrosine. Glycyl lysine isopeptide (Lys-Gly) (interchain with G-Cter in ubiquitin) cross-links involve residues lysine 26, lysine 30, lysine 39, lysine 47, and lysine 57. The interaction with CAVIN3 stretch occupies residues 82–94 (DGIWKASFTTFTV). Positions 105 to 125 (ALFGIPMALIWGIYFAILSFL) form an intramembrane region, helical. The Cytoplasmic segment spans residues 126–178 (HIWAVVPCIRSYLIEIQCISRIYSICIHTFCDPLFEAIGKIFSNVRIALQKEI). An interacts with SPRY1, SPRY2, SPRY3 and SPRY4 region spans residues 131–142 (VPCIRSYLIEIQ). 3 S-palmitoyl cysteine lipidation sites follow: cysteine 133, cysteine 143, and cysteine 156. Residues 149-160 (SICIHTFCDPLF) are interacts with SPRY1, SPRY2, and SPRY4. Positions 167–178 (FSNVRIALQKEI) are interacts with SPRY1, SPRY2, SPRY3 and SPRY4.

The protein belongs to the caveolin family. As to quaternary structure, homooligomer. Interacts with GLIPR2. Interacts with NOSTRIN. Interacts with SNAP25 and STX1A. Interacts (via the N-terminus) with DPP4; the interaction is direct. Interacts with CTNNB1, CDH1 and JUP. Interacts with PACSIN2; this interaction induces membrane tubulation. Interacts with SLC7A9. Interacts with BMX and BTK. Interacts with TGFBR1. Interacts with CAVIN3 (via leucine-zipper domain) in a cholesterol-sensitive manner. Interacts with CAVIN1. Interacts with EHD2 in a cholesterol-dependent manner. Forms a ternary complex with UBXN6 and VCP; mediates CAV1 targeting to lysosomes for degradation. Interacts with ABCG1; this interaction regulates ABCG1-mediated cholesterol efflux. Interacts with NEU3; this interaction enhances NEU3 sialidase activity within caveola. Interacts (via C-terminus) with SPRY1, SPRY2 (via C-terminus), SPRY3, and SPRY4. Interacts with IGFBP5; this interaction allows trafficking of IGFBP5 from the plasma membrane to the nucleus. Phosphorylated at Tyr-14 by ABL1 in response to oxidative stress. Post-translationally, ubiquitinated. Undergo monoubiquitination and multi- and/or polyubiquitination. Monoubiquitination of N-terminal lysines promotes integration in a ternary complex with UBXN6 and VCP which promotes oligomeric CAV1 targeting to lysosomes for degradation. Ubiquitinated by ZNRF1; leading to degradation and modulation of the TLR4-mediated immune response.

The protein resides in the golgi apparatus membrane. The protein localises to the cell membrane. Its subcellular location is the membrane. It is found in the caveola. It localises to the membrane raft. Functionally, may act as a scaffolding protein within caveolar membranes. Forms a stable heterooligomeric complex with CAV2 that targets to lipid rafts and drives caveolae formation. Mediates the recruitment of CAVIN proteins (CAVIN1/2/3/4) to the caveolae. Interacts directly with G-protein alpha subunits and can functionally regulate their activity. Involved in the costimulatory signal essential for T-cell receptor (TCR)-mediated T-cell activation. Its binding to DPP4 induces T-cell proliferation and NF-kappa-B activation in a T-cell receptor/CD3-dependent manner. Recruits CTNNB1 to caveolar membranes and may regulate CTNNB1-mediated signaling through the Wnt pathway. Negatively regulates TGFB1-mediated activation of SMAD2/3 by mediating the internalization of TGFBR1 from membrane rafts leading to its subsequent degradation. Binds 20(S)-hydroxycholesterol (20(S)-OHC). In Didelphis virginiana (North American opossum), this protein is Caveolin-1 (CAV1).